Here is a 248-residue protein sequence, read N- to C-terminus: DNA repair protein RecO (248 aa).

Belongs to the RecO family.

Involved in DNA repair and RecF pathway recombination. The chain is DNA repair protein RecO from Bacillus cytotoxicus (strain DSM 22905 / CIP 110041 / 391-98 / NVH 391-98).